Reading from the N-terminus, the 352-residue chain is Protein RecA (352 aa).

67–74 (GPESSGKT) serves as a coordination point for ATP.

The protein belongs to the RecA family.

The protein localises to the cytoplasm. In terms of biological role, can catalyze the hydrolysis of ATP in the presence of single-stranded DNA, the ATP-dependent uptake of single-stranded DNA by duplex DNA, and the ATP-dependent hybridization of homologous single-stranded DNAs. It interacts with LexA causing its activation and leading to its autocatalytic cleavage. This is Protein RecA from Chlamydia trachomatis serovar D (strain ATCC VR-885 / DSM 19411 / UW-3/Cx).